The following is a 304-amino-acid chain: UDP-N-acetylenolpyruvoylglucosamine reductase (304 aa).

The 166-residue stretch at 33–198 folds into the FAD-binding PCMH-type domain; the sequence is RVGGPADILV…IEATIELESG (166 aa). The active site involves R177. Residue S227 is the Proton donor of the active site. Residue E297 is part of the active site.

Belongs to the MurB family. The cofactor is FAD.

The protein resides in the cytoplasm. It catalyses the reaction UDP-N-acetyl-alpha-D-muramate + NADP(+) = UDP-N-acetyl-3-O-(1-carboxyvinyl)-alpha-D-glucosamine + NADPH + H(+). It functions in the pathway cell wall biogenesis; peptidoglycan biosynthesis. Functionally, cell wall formation. The chain is UDP-N-acetylenolpyruvoylglucosamine reductase from Clostridium perfringens (strain SM101 / Type A).